The chain runs to 93 residues: Mitochondrial import inner membrane translocase subunit TIM10 (93 aa).

An interaction with transmembrane regions of transmembrane proteins in transit region spans residues 1–31 (MSFLGFGGGQPQLSSQQKIQAAEAELDLVTD). The short motif at 40–65 (CYKKCINTSYSEGELNKNESSCLDRC) is the Twin CX3C motif element. Disulfide bonds link C40/C65 and C44/C61. Positions 73-93 (NVQVGENMQKMGQSFNAAGKF) are required for heterohexamerization.

The protein belongs to the small Tim family. Heterohexamer; composed of 3 copies of TIM9 and 3 copies of TIM10, named soluble 70 kDa complex. Associates directly with the TIM12 component of the TIM22 complex, whose core is composed of TIM18, TIM22 and TIM54. Interacts with the transmembrane regions of multi-pass transmembrane proteins in transit.

Its subcellular location is the mitochondrion inner membrane. The protein resides in the mitochondrion intermembrane space. Its function is as follows. Mitochondrial intermembrane chaperone that participates in the import and insertion of multi-pass transmembrane proteins into the mitochondrial inner membrane. Also required for the transfer of beta-barrel precursors from the TOM complex to the sorting and assembly machinery (SAM complex) of the outer membrane. Acts as a chaperone-like protein that protects the hydrophobic precursors from aggregation and guide them through the mitochondrial intermembrane space. Compared to TIM9, it may function as a substrate sensor. The chain is Mitochondrial import inner membrane translocase subunit TIM10 (TIM10) from Saccharomyces cerevisiae (strain ATCC 204508 / S288c) (Baker's yeast).